Consider the following 421-residue polypeptide: UDP-N-acetylglucosamine 1-carboxyvinyltransferase 2 (421 aa).

Residue 22–23 (KN) coordinates phosphoenolpyruvate. Arginine 94 is a binding site for UDP-N-acetyl-alpha-D-glucosamine. The active-site Proton donor is the cysteine 118. Position 118 is a 2-(S-cysteinyl)pyruvic acid O-phosphothioketal (cysteine 118). Positions 308 and 330 each coordinate UDP-N-acetyl-alpha-D-glucosamine.

Belongs to the EPSP synthase family. MurA subfamily.

The protein localises to the cytoplasm. It catalyses the reaction phosphoenolpyruvate + UDP-N-acetyl-alpha-D-glucosamine = UDP-N-acetyl-3-O-(1-carboxyvinyl)-alpha-D-glucosamine + phosphate. It functions in the pathway cell wall biogenesis; peptidoglycan biosynthesis. Cell wall formation. Adds enolpyruvyl to UDP-N-acetylglucosamine. The protein is UDP-N-acetylglucosamine 1-carboxyvinyltransferase 2 of Lactococcus lactis subsp. lactis (strain IL1403) (Streptococcus lactis).